The following is a 242-amino-acid chain: Type III pantothenate kinase (242 aa).

7 to 14 serves as a coordination point for ATP; it reads DLGNSRFK. Substrate is bound by residues Tyr91 and 98–101; that span reads GVDR. The Proton acceptor role is filled by Asp100. Thr121 contacts ATP. Residue Thr171 coordinates substrate.

Belongs to the type III pantothenate kinase family. As to quaternary structure, homodimer. NH4(+) is required as a cofactor. K(+) serves as cofactor.

The protein resides in the cytoplasm. It carries out the reaction (R)-pantothenate + ATP = (R)-4'-phosphopantothenate + ADP + H(+). The protein operates within cofactor biosynthesis; coenzyme A biosynthesis; CoA from (R)-pantothenate: step 1/5. Catalyzes the phosphorylation of pantothenate (Pan), the first step in CoA biosynthesis. The sequence is that of Type III pantothenate kinase from Xanthomonas oryzae pv. oryzae (strain MAFF 311018).